Reading from the N-terminus, the 204-residue chain is Per os infectivity factor 3 (204 aa).

Forms the PIF complex together with PIF1 and PIF2. The complex also interacts with per os infectivity factor PIF0.

Functionally, per os factor that plays a role in the initiation of host midgut infection. Unlike PIF1 and PIF2, PIF3 is not involved in specific binding of occluded virions (ODV) to the host midgut target cells. The protein is Per os infectivity factor 3 (AC115) of Lepidoptera (butterflies and moths).